The following is a 71-amino-acid chain: Cytochrome c oxidase subunit 7, mitochondrial (71 aa).

The Mitochondrial matrix portion of the chain corresponds to Met-1–Ser-35. The chain crosses the membrane as a helical span at residues Gly-36–Ser-58. At Arg-59 to Asp-71 the chain is on the mitochondrial intermembrane side.

This sequence belongs to the cytochrome c oxidase VIIa family. In terms of assembly, component of the cytochrome c oxidase (complex IV, CIV), a multisubunit enzyme composed of 11 subunits. The complex is composed of a catalytic core of 3 subunits Cox1, Cox2 and Cox3, encoded in the mitochondrial DNA, and 8 supernumerary subunits Cox4, Cox5a/Cox5, Cox6, Cox7, Cox8, Cox7a/Cox9, Cox6b/Cox12 and Cox6a/Cox13, which are encoded in the nuclear genome. The complex exists as a monomer or a dimer and forms respiratory supercomplexes (SCs) in the inner mitochondrial membrane with NADH-ubiquinone oxidoreductase (complex I, CI) and ubiquinol-cytochrome c oxidoreductase (cytochrome b-c1 complex, complex III, CIII), resulting in various different assemblies (supercomplexes I(1)IV(1), I(1)III(3)IV(2), III(2)IV(1) and III(2)IV(2) as well as larger supercomplexes of compositions like I(1)III(2)IV(5-6)).

It is found in the mitochondrion inner membrane. It participates in energy metabolism; oxidative phosphorylation. Functionally, component of the cytochrome c oxidase, the last enzyme in the mitochondrial electron transport chain which drives oxidative phosphorylation. The respiratory chain contains 3 multisubunit complexes succinate dehydrogenase (complex II, CII), ubiquinol-cytochrome c oxidoreductase (cytochrome b-c1 complex, complex III, CIII) and cytochrome c oxidase (complex IV, CIV), that cooperate to transfer electrons derived from NADH and succinate to molecular oxygen, creating an electrochemical gradient over the inner membrane that drives transmembrane transport and the ATP synthase. Cytochrome c oxidase is the component of the respiratory chain that catalyzes the reduction of oxygen to water. Electrons originating from reduced cytochrome c in the intermembrane space (IMS) are transferred via the dinuclear copper A center (CU(A)) of Cox2 and heme A of Cox1 to the active site in Cox1, a binuclear center (BNC) formed by heme A3 and copper B (CU(B)). The BNC reduces molecular oxygen to 2 water molecules using 4 electrons from cytochrome c in the IMS and 4 protons from the mitochondrial matrix. This Neurospora crassa (strain ATCC 24698 / 74-OR23-1A / CBS 708.71 / DSM 1257 / FGSC 987) protein is Cytochrome c oxidase subunit 7, mitochondrial.